The chain runs to 233 residues: Orotidine 5'-phosphate decarboxylase (233 aa).

Residues aspartate 13, lysine 35, 62–71 (DLKFHDIPNT), threonine 122, arginine 182, glutamine 191, glycine 211, and arginine 212 each bind substrate. Catalysis depends on lysine 64, which acts as the Proton donor.

It belongs to the OMP decarboxylase family. Type 1 subfamily. In terms of assembly, homodimer.

It carries out the reaction orotidine 5'-phosphate + H(+) = UMP + CO2. The protein operates within pyrimidine metabolism; UMP biosynthesis via de novo pathway; UMP from orotate: step 2/2. Functionally, catalyzes the decarboxylation of orotidine 5'-monophosphate (OMP) to uridine 5'-monophosphate (UMP). The polypeptide is Orotidine 5'-phosphate decarboxylase (Pseudomonas putida (strain ATCC 47054 / DSM 6125 / CFBP 8728 / NCIMB 11950 / KT2440)).